The chain runs to 463 residues: L-seryl-tRNA(Sec) selenium transferase (463 aa).

The residue at position 294 (Lys294) is an N6-(pyridoxal phosphate)lysine.

This sequence belongs to the SelA family. Pyridoxal 5'-phosphate serves as cofactor.

It is found in the cytoplasm. The enzyme catalyses L-seryl-tRNA(Sec) + selenophosphate + H(+) = L-selenocysteinyl-tRNA(Sec) + phosphate. Its pathway is aminoacyl-tRNA biosynthesis; selenocysteinyl-tRNA(Sec) biosynthesis; selenocysteinyl-tRNA(Sec) from L-seryl-tRNA(Sec) (bacterial route): step 1/1. In terms of biological role, converts seryl-tRNA(Sec) to selenocysteinyl-tRNA(Sec) required for selenoprotein biosynthesis. In Hyphomonas neptunium (strain ATCC 15444), this protein is L-seryl-tRNA(Sec) selenium transferase.